Here is a 114-residue protein sequence, read N- to C-terminus: Large ribosomal subunit protein uL22 (114 aa).

It belongs to the universal ribosomal protein uL22 family. In terms of assembly, part of the 50S ribosomal subunit.

This protein binds specifically to 23S rRNA; its binding is stimulated by other ribosomal proteins, e.g. L4, L17, and L20. It is important during the early stages of 50S assembly. It makes multiple contacts with different domains of the 23S rRNA in the assembled 50S subunit and ribosome. Functionally, the globular domain of the protein is located near the polypeptide exit tunnel on the outside of the subunit, while an extended beta-hairpin is found that lines the wall of the exit tunnel in the center of the 70S ribosome. The polypeptide is Large ribosomal subunit protein uL22 (Myxococcus xanthus (strain DK1622)).